The following is a 475-amino-acid chain: ATP synthase subunit beta, chloroplastic (475 aa).

155 to 162 contributes to the ATP binding site; sequence GGAGVGKT.

The protein belongs to the ATPase alpha/beta chains family. In terms of assembly, F-type ATPases have 2 components, CF(1) - the catalytic core - and CF(0) - the membrane proton channel. CF(1) has five subunits: alpha(3), beta(3), gamma(1), delta(1), epsilon(1). CF(0) has four main subunits: a(1), b(1), b'(1) and c(9-12).

It is found in the plastid. Its subcellular location is the chloroplast thylakoid membrane. It catalyses the reaction ATP + H2O + 4 H(+)(in) = ADP + phosphate + 5 H(+)(out). Produces ATP from ADP in the presence of a proton gradient across the membrane. The catalytic sites are hosted primarily by the beta subunits. The protein is ATP synthase subunit beta, chloroplastic of Pyropia yezoensis (Susabi-nori).